Reading from the N-terminus, the 815-residue chain is Leucine--tRNA ligase (815 aa).

The 'HIGH' region motif lies at 42–52 (PYPSGRLHMGH). The 'KMSKS' region signature appears at 574–578 (KMSKS). Lys-577 serves as a coordination point for ATP.

It belongs to the class-I aminoacyl-tRNA synthetase family.

It localises to the cytoplasm. The enzyme catalyses tRNA(Leu) + L-leucine + ATP = L-leucyl-tRNA(Leu) + AMP + diphosphate. This Marinomonas sp. (strain MWYL1) protein is Leucine--tRNA ligase.